We begin with the raw amino-acid sequence, 55 residues long: Large ribosomal subunit protein bL32 (55 aa).

This sequence belongs to the bacterial ribosomal protein bL32 family.

The sequence is that of Large ribosomal subunit protein bL32 from Aeromonas hydrophila subsp. hydrophila (strain ATCC 7966 / DSM 30187 / BCRC 13018 / CCUG 14551 / JCM 1027 / KCTC 2358 / NCIMB 9240 / NCTC 8049).